The following is a 200-amino-acid chain: uncharacterized protein (200 aa).

The region spanning 3-119 (RLFIAEDQRM…DLADAIRKCV (117 aa)) is the Response regulatory domain. The residue at position 54 (aspartate 54) is a 4-aspartylphosphate. The region spanning 133–198 (MMRDENPLTV…EAASIAEEKG (66 aa)) is the HTH luxR-type domain. A DNA-binding region (H-T-H motif) is located at residues 157–176 (TKDITLELYLSQGTVRNYIS).

Post-translationally, phosphorylated by YvfT.

Its subcellular location is the cytoplasm. Functionally, member of the two-component regulatory system YvfT/YvfU. This is an uncharacterized protein from Bacillus subtilis (strain 168).